Consider the following 60-residue polypeptide: UI (60 aa).

Over residues 1–14 the composition is skewed to low complexity; sequence AAAAGDSAASDLLG. Residues 1–22 are disordered; that stretch reads AAAAGDSAASDLLGDNILRSED. A Valine amide modification is found at Val-60.

It belongs to the sauvagine/corticotropin-releasing factor/urotensin I family.

The protein localises to the secreted. Its function is as follows. Urotensin is found in the teleost caudal neurosecretory system. It has a suggested role in osmoregulation and as a corticotropin-releasing factor. The non-hormonal portion of this precursor may be a urotensin binding protein, urophysin. In Platichthys flesus (European flounder), this protein is UI.